Here is a 469-residue protein sequence, read N- to C-terminus: Glutamate--tRNA ligase (469 aa).

The 'HIGH' region motif lies at 9 to 19 (PSPTGFLHVGG). 4 residues coordinate Zn(2+): Cys98, Cys100, Cys125, and Asp127. The 'KMSKS' region signature appears at 236 to 240 (KLSKR). Lys239 serves as a coordination point for ATP.

It belongs to the class-I aminoacyl-tRNA synthetase family. Glutamate--tRNA ligase type 1 subfamily. As to quaternary structure, monomer. Zn(2+) is required as a cofactor.

Its subcellular location is the cytoplasm. The enzyme catalyses tRNA(Glu) + L-glutamate + ATP = L-glutamyl-tRNA(Glu) + AMP + diphosphate. Catalyzes the attachment of glutamate to tRNA(Glu) in a two-step reaction: glutamate is first activated by ATP to form Glu-AMP and then transferred to the acceptor end of tRNA(Glu). This chain is Glutamate--tRNA ligase, found in Shewanella sediminis (strain HAW-EB3).